A 577-amino-acid polypeptide reads, in one-letter code: MRPSVITVAVLFVQSTWASFAFGNPMSMRNKAHTNDLVNSKGKPLVGRFLHITDMHPDIYYEKGSTVDHYCHSYDHNSDDTPLGKSKVGYLSPGPGYECDSSPALIDKTLEWLKEHQDDVLGGIDFILWTGDNSRHDNDNHFPRTQSEILASNEDLVNKMIEAFPDVPIVSAIGNNDIYPHNIMEAGPSSMTRQLAGAWDALIPYEERHTFEKGSYYLCDVIPDKLAAISINTLYLSNKNAAVDGCPDDNLDEPGSLFMRWFKIQLEAYRLKGMKVWLLGHIPPTRGQWYEDCYTSFTDLLYEFRDIIVGQLYGHMNINHFVFLEFDKLPVDTESYGIKSAQPKYVKSLIDAQYAELPTFPENLTEEFLNGTVGNYSLATVGGSIIPEMFPTFRVYEYNISDIANQLDDREELTEITSFNWETLEEQSQSDYEIDKKKKKKKKNNKKKKKNKRKNIKPGPLGPAYVPSLFTPISFKQYFLNTSNYMDATKDTEISYELLYTSKDSPYNMPDLTVPEYMRLAKRIATCDKPEDPHQFKLQSGDQNTFRISKKKKPSICPIAYTYLWHAYIGSISDFED.

The Cytoplasmic portion of the chain corresponds to methionine 1–arginine 2. A helical; Signal-anchor for type II membrane protein transmembrane segment spans residues proline 3–glycine 23. Residues asparagine 24 to aspartate 577 are Vacuolar-facing. Residues asparagine 363, asparagine 370, asparagine 375, and asparagine 399 are each glycosylated (N-linked (GlcNAc...) asparagine). A disordered region spans residues serine 430 to proline 460. Positions lysine 437–isoleucine 456 are enriched in basic residues. N-linked (GlcNAc...) asparagine glycosylation is present at asparagine 481.

This sequence belongs to the endopolyphosphatase PPN1 family. Requires a divalent metal cation as cofactor. Processing by proteases in the vacuole may be required for activation.

It localises to the vacuole membrane. The catalysed reaction is [phosphate](n+1) + n H2O = (n+1) phosphate + n H(+). Functionally, catalyzes the hydrolysis of inorganic polyphosphate (polyP) chains of many hundreds of phosphate residues into shorter lengths. The chain is Endopolyphosphatase (ppn1) from Schizosaccharomyces pombe (strain 972 / ATCC 24843) (Fission yeast).